The sequence spans 893 residues: Exocyst complex component 4 (893 aa).

Residues 1-27 form a disordered region; that stretch reads MNENGATPVAAARRHRPLPAERATSNS.

This sequence belongs to the SEC8 family. In terms of assembly, the exocyst complex is composed of sec-3/exoc1, sec-5/exoc2, sec-6/exoc3, sec-8/exoc4, sec-10/exoc5, sec-15/exoc6, exo-70/exoc7 and exo-84/exoc8. In terms of tissue distribution, pseudocoelom.

In terms of biological role, component of the exocyst complex involved in the docking of exocytic vesicles with fusion sites on the plasma membrane. This Caenorhabditis elegans protein is Exocyst complex component 4 (sec-8).